Consider the following 353-residue polypeptide: DNA polymerase IV (353 aa).

Residues 14–198 (IIHIDMDAFF…MDISKFHGVG (185 aa)) form the UmuC domain. Mg(2+) contacts are provided by aspartate 18 and aspartate 116. Residue glutamate 117 is part of the active site.

Belongs to the DNA polymerase type-Y family. Monomer. Mg(2+) serves as cofactor.

The protein resides in the cytoplasm. The catalysed reaction is DNA(n) + a 2'-deoxyribonucleoside 5'-triphosphate = DNA(n+1) + diphosphate. Poorly processive, error-prone DNA polymerase involved in untargeted mutagenesis. Copies undamaged DNA at stalled replication forks, which arise in vivo from mismatched or misaligned primer ends. These misaligned primers can be extended by PolIV. Exhibits no 3'-5' exonuclease (proofreading) activity. May be involved in translesional synthesis, in conjunction with the beta clamp from PolIII. The protein is DNA polymerase IV of Streptococcus pneumoniae serotype 2 (strain D39 / NCTC 7466).